Reading from the N-terminus, the 616-residue chain is Cleavage stimulation factor subunit 2 tau variant (616 aa).

In terms of domain architecture, RRM spans 16–94 (RSVFVGNIPY…RALRVDNAAS (79 aa)). Disordered stretches follow at residues 203–241 (GKSQ…QPQH) and 262–418 (IPAP…SRAM). Composition is skewed to low complexity over residues 223-233 (PGPNVLLNQQN) and 319-331 (VTPG…GLLG). Thr-320 carries the phosphothreonine modification. Positions 368 to 381 (SGHDTRGPSSHEMR) are enriched in basic and acidic residues. Residues 418 to 422 (METRA) form a 1-1 repeat. The interval 418–462 (METRAMETEVLETRVMERRGMETCAMETRGMEARGMDARGLEMRG) is 9 X 5 AA tandem repeats of M-E-T-R-[AG]. A 1-2; approximate repeat occupies 423 to 427 (METEV). The 1-3; approximate repeat unit spans residues 428–432 (LETRV). The stretch at 433–437 (MERRG) is one 1-4; approximate repeat. The stretch at 438-442 (METCA) is one 1-5; approximate repeat. One copy of the 1-6 repeat lies at 443-447 (METRG). A 1-7; approximate repeat occupies 448-452 (MEARG). Residues 453–457 (MDARG) form a 1-8; approximate repeat. The stretch at 458–462 (LEMRG) is one 1-9; approximate repeat. 4 repeat units span residues 505 to 509 (GAGMQ), 510 to 514 (GTGIQ), 515 to 519 (GTGMQ), and 520 to 524 (GAGIQ). A 9 X 5 AA tandem repeats of G-[AT]-G-[MI]-Q region spans residues 505–549 (GAGMQGTGIQGTGMQGAGIQGGGMQGAGIQGVSIQGGGIQGGGIQ). A 2-5; approximate repeat occupies 525–529 (GGGMQ). The 2-6 repeat unit spans residues 530–534 (GAGIQ). The 2-7; approximate repeat unit spans residues 535–539 (GVSIQ). One copy of the 2-8; approximate repeat lies at 540-544 (GGGIQ). Positions 542–573 (GIQGGGIQGASKQGGSQPSSFSPGQSQVTPQD) are disordered. The 2-9; approximate repeat unit spans residues 545-549 (GGGIQ). The span at 550–568 (GASKQGGSQPSSFSPGQSQ) shows a compositional bias: low complexity. Ser-563 carries the post-translational modification Phosphoserine.

Its subcellular location is the nucleus. May play a significant role in AAUAAA-independent mRNA polyadenylation in germ cells. Directly involved in the binding to pre-mRNAs. This chain is Cleavage stimulation factor subunit 2 tau variant (CSTF2T), found in Homo sapiens (Human).